Here is a 213-residue protein sequence, read N- to C-terminus: Orotate phosphoribosyltransferase (213 aa).

Lys-26 contacts 5-phospho-alpha-D-ribose 1-diphosphate. 34–35 (FF) serves as a coordination point for orotate. Residues 72 to 73 (YK), Arg-99, Lys-100, Lys-103, His-105, and 124 to 132 (DDVITAGTA) contribute to the 5-phospho-alpha-D-ribose 1-diphosphate site. 2 residues coordinate orotate: Thr-128 and Arg-156.

It belongs to the purine/pyrimidine phosphoribosyltransferase family. PyrE subfamily. As to quaternary structure, homodimer. Mg(2+) serves as cofactor.

It catalyses the reaction orotidine 5'-phosphate + diphosphate = orotate + 5-phospho-alpha-D-ribose 1-diphosphate. Its pathway is pyrimidine metabolism; UMP biosynthesis via de novo pathway; UMP from orotate: step 1/2. Catalyzes the transfer of a ribosyl phosphate group from 5-phosphoribose 1-diphosphate to orotate, leading to the formation of orotidine monophosphate (OMP). The chain is Orotate phosphoribosyltransferase from Salmonella typhi.